A 184-amino-acid chain; its full sequence is Large ribosomal subunit protein uL6 (184 aa).

The protein belongs to the universal ribosomal protein uL6 family. In terms of assembly, part of the 50S ribosomal subunit.

This protein binds to the 23S rRNA, and is important in its secondary structure. It is located near the subunit interface in the base of the L7/L12 stalk, and near the tRNA binding site of the peptidyltransferase center. This chain is Large ribosomal subunit protein uL6, found in Thermococcus kodakarensis (strain ATCC BAA-918 / JCM 12380 / KOD1) (Pyrococcus kodakaraensis (strain KOD1)).